We begin with the raw amino-acid sequence, 586 residues long: Glutamine--tRNA ligase (586 aa).

The 'HIGH' region motif lies at 58-68 (PEPNGYLHIGH). ATP contacts are provided by residues 59-61 (EPN) and 65-71 (HIGHAKS). L-glutamine-binding residues include aspartate 91 and tyrosine 240. ATP is bound by residues threonine 259 and 294–295 (RL). The 'KMSKS' region signature appears at 301-305 (VTSKR).

It belongs to the class-I aminoacyl-tRNA synthetase family. In terms of assembly, monomer.

Its subcellular location is the cytoplasm. The enzyme catalyses tRNA(Gln) + L-glutamine + ATP = L-glutaminyl-tRNA(Gln) + AMP + diphosphate. The protein is Glutamine--tRNA ligase of Bordetella avium (strain 197N).